The primary structure comprises 364 residues: Probable protein phosphatase methylesterase 1 (364 aa).

Positions 1-53 are disordered; that stretch reads MSDDKLDTLPDLQSETSHVTTPHRQNDLLRQAVTHGRPPPVPSTSTSGKKREM. Residues 11–23 are compositionally biased toward polar residues; sequence DLQSETSHVTTPH. Active-site residues include Ser164, Asp190, and His316.

It belongs to the AB hydrolase superfamily.

It catalyses the reaction [phosphatase 2A protein]-C-terminal L-leucine methyl ester + H2O = [phosphatase 2A protein]-C-terminal L-leucine + methanol + H(+). Its function is as follows. Demethylates proteins that have been reversibly carboxymethylated. The chain is Probable protein phosphatase methylesterase 1 from Caenorhabditis elegans.